Here is a 248-residue protein sequence, read N- to C-terminus: Inhibitor of growth protein 4 (248 aa).

Positions 25-118 (FQLMRDLDQR…ADLKEKQIES (94 aa)) form a coiled coil. N6-acetyllysine is present on residues lysine 112, lysine 127, and lysine 129. A disordered region spans residues 115–160 (QIESSDYDSSSSKGKKSRTQKEKKAARARSKGKNSDEEAPKAAQKK). The Bipartite nuclear localization signal signature appears at 127 to 147 (KGKKSRTQKEKKAARARSKGK). Arginine 132 carries the post-translational modification Citrulline. N6-acetyllysine is present on residues lysine 145, lysine 147, and lysine 155. Arginine 165 carries the citrulline modification. Residues 195–244 (PTYCLCHQVSYGEMIGCDNPDCSIERFHFACVGLTTKPRGKWFCPRCSQE) form a PHD-type zinc finger. Zn(2+) contacts are provided by cysteine 198, cysteine 200, cysteine 211, cysteine 216, histidine 222, cysteine 225, cysteine 238, and cysteine 241.

The protein belongs to the ING family. As to quaternary structure, homodimer. Component of the HBO1 complex composed of KAT7/HBO1, MEAF6, ING4 or ING5, and one scaffold subunit: complexes containing BRPF scaffold (BRPF1, BRD1/BRPF2 or BRPF3) direct KAT7/HBO1 specificity towards H3K14ac, while complexes containing JADE scaffold (JADE1, JADE2 and JADE3) mediate acetylation of histone H4. Interacts with H3K4me3 and to a lesser extent with H3K4me2, the interaction augments KAT7/HBO1 acetylation activity on H3 tails. Interacts with EP300, RELA and TP53; these interactions may be indirect. Interacts with EGLN1. Interacts with BCL2A1. Post-translationally, citrullination by PADI4 within the nuclear localization signal disrupts the interaction with p53 and increases susceptibility to degradation.

It is found in the nucleus. Functionally, component of HBO1 complexes, which specifically mediate acetylation of histone H3 at 'Lys-14' (H3K14ac), and have reduced activity toward histone H4. Through chromatin acetylation it may function in DNA replication. May inhibit tumor progression by modulating the transcriptional output of signaling pathways which regulate cell proliferation. Can suppress brain tumor angiogenesis through transcriptional repression of RELA/NFKB3 target genes when complexed with RELA. May also specifically suppress loss of contact inhibition elicited by activated oncogenes such as MYC. Represses hypoxia inducible factor's (HIF) activity by interacting with HIF prolyl hydroxylase 2 (EGLN1). Can enhance apoptosis induced by serum starvation in mammary epithelial cell line HC11. The sequence is that of Inhibitor of growth protein 4 (ING4) from Bos taurus (Bovine).